The following is a 297-amino-acid chain: Ubiquinol oxidase 2, mitochondrial (297 aa).

Residues 17 to 43 (VALNDKQHDKKVENGGAAASGGGDGGD) form a disordered region. A helical transmembrane segment spans residues 122–142 (AMMLETVAAVPGMVGGMLLHC). Fe cation contacts are provided by E126, E165, and H168. A helical transmembrane segment spans residues 184-204 (ALVFAVQGVFINAYFVTYLLS). Positions 216, 267, and 270 each coordinate Fe cation.

Belongs to the alternative oxidase family. Homodimer; disulfide-linked. It depends on Fe cation as a cofactor.

The protein localises to the mitochondrion inner membrane. It carries out the reaction 2 a ubiquinol + O2 = 2 a ubiquinone + 2 H2O. In terms of biological role, catalyzes the cyanide-resistant oxidation of ubiquinol and the reduction of molecular oxygen to water, but does not translocate protons and consequently is not linked to oxidative phosphorylation. May increase respiration when the cytochrome respiratory pathway is restricted, or in response to low temperatures. The protein is Ubiquinol oxidase 2, mitochondrial (AOX2) of Nicotiana tabacum (Common tobacco).